Consider the following 289-residue polypeptide: Phytoene synthase (289 aa).

It belongs to the phytoene/squalene synthase family. ATP is required as a cofactor. It depends on Mn(2+) as a cofactor. Mg(2+) serves as cofactor.

The protein operates within carotenoid biosynthesis; phytoene biosynthesis. In terms of biological role, involved in the biosynthesis of carotenoids. Catalyzes the condensation of two molecules of geranylgeranyl diphosphate (GGPP) to give prephytoene diphosphate (PPPP) and the subsequent rearrangement of the cyclopropylcarbinyl intermediate to yield phytoene. This chain is Phytoene synthase (crtB), found in Thermus thermophilus (strain ATCC BAA-163 / DSM 7039 / HB27).